Reading from the N-terminus, the 39-residue chain is Potassium channel toxin alpha-KTx 2.17 (39 aa).

Disulfide bonds link C7-C29, C13-C34, and C17-C36. At I39 the chain carries Isoleucine amide.

The protein belongs to the short scorpion toxin superfamily. Potassium channel inhibitor family. Alpha-KTx 02 subfamily. Expressed by the venom gland.

The protein resides in the secreted. Blocks human voltage-gated potassium channels Kv1.1/KCNA1 (IC(50)=4.8 nM) and Kv1.2/KCNA2 (IC(50)=2.9 nM). The chain is Potassium channel toxin alpha-KTx 2.17 from Centruroides tecomanus (Scorpion).